A 71-amino-acid polypeptide reads, in one-letter code: Small ribosomal subunit protein bS21 (71 aa).

Belongs to the bacterial ribosomal protein bS21 family.

The polypeptide is Small ribosomal subunit protein bS21 (Hydrogenovibrio crunogenus (strain DSM 25203 / XCL-2) (Thiomicrospira crunogena)).